We begin with the raw amino-acid sequence, 204 residues long: Leucyl/phenylalanyl-tRNA--protein transferase (204 aa).

Belongs to the L/F-transferase family.

The protein resides in the cytoplasm. It catalyses the reaction N-terminal L-lysyl-[protein] + L-leucyl-tRNA(Leu) = N-terminal L-leucyl-L-lysyl-[protein] + tRNA(Leu) + H(+). The catalysed reaction is N-terminal L-arginyl-[protein] + L-leucyl-tRNA(Leu) = N-terminal L-leucyl-L-arginyl-[protein] + tRNA(Leu) + H(+). It carries out the reaction L-phenylalanyl-tRNA(Phe) + an N-terminal L-alpha-aminoacyl-[protein] = an N-terminal L-phenylalanyl-L-alpha-aminoacyl-[protein] + tRNA(Phe). In terms of biological role, functions in the N-end rule pathway of protein degradation where it conjugates Leu, Phe and, less efficiently, Met from aminoacyl-tRNAs to the N-termini of proteins containing an N-terminal arginine or lysine. This is Leucyl/phenylalanyl-tRNA--protein transferase from Rhizobium meliloti (strain 1021) (Ensifer meliloti).